The following is an 82-amino-acid chain: MAHKKGASSSRNGRDSNPQYLGVKKFGGEAVVAGNIIVRQRGTNFHPGHNVGMGKDHTLFALTDGSVKFGVRRDRKVVDVIA.

The disordered stretch occupies residues 1–20 (MAHKKGASSSRNGRDSNPQY). Residues 7–19 (ASSSRNGRDSNPQ) show a composition bias toward polar residues.

It belongs to the bacterial ribosomal protein bL27 family.

The sequence is that of Large ribosomal subunit protein bL27 from Bifidobacterium longum (strain NCC 2705).